A 733-amino-acid polypeptide reads, in one-letter code: Sulfate transporter (733 aa).

Basic and acidic residues predominate over residues 1-18 (MSLKNEEQNDLSPKDSVK). The segment at 1–37 (MSLKNEEQNDLSPKDSVKGNDQYRAPSGIHLEREEES) is disordered. Residues Ser-12 and Ser-16 each carry the phosphoserine modification. 2 helical membrane passes run 113–133 (VMSGLIVGILLVPQSIAYSLL) and 138–158 (PIYGLYTSFFASLIYFILGTS). Asn-194 is a glycosylation site (N-linked (GlcNAc...) asparagine). 6 helical membrane passes run 214–234 (IIVGSTVTFVAGVYQVAMGFF), 237–257 (GFVSVYLSDALLGGFVTGASF), 379–399 (IDAIAIAIIGFAITVSLSEMF), 415–435 (AIGFCNIIPSFFHCFTTSAAL), 453–473 (VMTALVLLLVLLVIAPLFFSL), and 519–539 (LISTEIGLLTGVCFSMFCVIL). Positions 563 to 714 (AYKNLQAKSG…SVYEAMTFAE (152 aa)) constitute an STAS domain.

It belongs to the SLC26A/SulP transporter (TC 2.A.53) family. Post-translationally, N-glycosylated.

Its subcellular location is the cell membrane. It localises to the apical cell membrane. It catalyses the reaction oxalate(in) + sulfate(out) = oxalate(out) + sulfate(in). It carries out the reaction sulfate(out) + 2 chloride(in) = sulfate(in) + 2 chloride(out). The catalysed reaction is oxalate(out) + 2 chloride(in) = oxalate(in) + 2 chloride(out). The enzyme catalyses bromide(in) + chloride(out) = bromide(out) + chloride(in). It catalyses the reaction nitrate(in) + chloride(out) = nitrate(out) + chloride(in). It carries out the reaction iodide(in) + chloride(out) = iodide(out) + chloride(in). Its function is as follows. Sulfate transporter which mediates sulfate uptake into chondrocytes in order to maintain adequate sulfation of proteoglycans which is needed for cartilage development. Mediates electroneutral anion exchange of sulfate ions for oxalate ions, sulfate and oxalate ions for chloride and/or hydroxyl ions and chloride ions for bromide, iodide and nitrate ions. The coupling of sulfate transport to both hydroxyl and chloride ions likely serves to ensure transport at both acidic pH when most sulfate uptake is mediated by sulfate-hydroxide exchange and alkaline pH when most sulfate uptake is mediated by sulfate-chloride exchange. Essential for chondrocyte proliferation, differentiation and cell size expansion. The chain is Sulfate transporter (SLC26A2) from Bubalus bubalis (Domestic water buffalo).